The primary structure comprises 816 residues: Phosphatidylinositol 4-kinase beta (816 aa).

Disordered regions lie at residues 1–28 (MGDT…NGGS), 93–120 (PPTG…RRRR), and 249–318 (HRKR…SFSS). G2 is subject to N-acetylglycine. The interval 2–68 (GDTVVAPAPL…VKLSHGGVAS (67 aa)) is interaction with ACBD3. Residues 49–242 (QKACQEVLQK…GTKLRRLILS (194 aa)) form the PIK helical domain. A Phosphoserine modification is found at S258. T263 is subject to Phosphothreonine. A phosphoserine mark is found at S266, S275, S277, S284, S294, S428, and S511. Low complexity predominate over residues 278–294 (DATASISLSSSLKRTAS). A phosphothreonine mark is found at T517 and T519. One can recognise a PI3K/PI4K catalytic domain in the interval 535-801 (EPWQEKVRRI…MVDGSMRSIT (267 aa)). The interval 541–547 (VRRIREG) is G-loop. Positions 668–676 (QVKDRHNGN) are catalytic loop. Residues 687–711 (HIDFGFILSSSPRNLGFETSAFKLT) form an activation loop region.

This sequence belongs to the PI3/PI4-kinase family. Type III PI4K subfamily. Interacts with ARF1 and ARF3 in the Golgi complex, but not with ARF4, ARF5 or ARF6. Interacts with NCS1/FREQ in a calcium-independent manner. Interacts with CALN1/CABP8 and CALN2/CABP7; in a calcium-dependent manner; this interaction competes with NCS1/FREQ binding. Interacts with ACBD3. Interacts with ARMH3, YWHAB, YWHAE, YWHAG, YWHAH, YWHAQ, YWHAZ and SFN. Interacts with GGA2 (via VHS domain); the interaction is important for PI4KB location at the Golgi apparatus membrane. Interacts with ATG9A. Mg(2+) is required as a cofactor. Requires Mn(2+) as cofactor.

It is found in the endomembrane system. The protein localises to the mitochondrion outer membrane. It localises to the rough endoplasmic reticulum membrane. The protein resides in the golgi apparatus. Its subcellular location is the golgi apparatus membrane. It catalyses the reaction a 1,2-diacyl-sn-glycero-3-phospho-(1D-myo-inositol) + ATP = a 1,2-diacyl-sn-glycero-3-phospho-(1D-myo-inositol 4-phosphate) + ADP + H(+). Its activity is regulated as follows. Inhibited by wortmannin. Increased kinase activity upon interaction with NCS1/FREQ. In terms of biological role, phosphorylates phosphatidylinositol (PI) in the first committed step in the production of the second messenger inositol-1,4,5,-trisphosphate (PIP). May regulate Golgi disintegration/reorganization during mitosis, possibly via its phosphorylation. Involved in Golgi-to-plasma membrane trafficking. May play an important role in the inner ear development. The sequence is that of Phosphatidylinositol 4-kinase beta (PI4KB) from Rhinolophus ferrumequinum (Greater horseshoe bat).